A 224-amino-acid polypeptide reads, in one-letter code: 7-cyano-7-deazaguanine synthase (224 aa).

Leucine 9 to leucine 19 provides a ligand contact to ATP. Residues cysteine 188, cysteine 198, cysteine 201, and cysteine 204 each contribute to the Zn(2+) site.

The protein belongs to the QueC family. The cofactor is Zn(2+).

It carries out the reaction 7-carboxy-7-deazaguanine + NH4(+) + ATP = 7-cyano-7-deazaguanine + ADP + phosphate + H2O + H(+). Its pathway is purine metabolism; 7-cyano-7-deazaguanine biosynthesis. In terms of biological role, catalyzes the ATP-dependent conversion of 7-carboxy-7-deazaguanine (CDG) to 7-cyano-7-deazaguanine (preQ(0)). The polypeptide is 7-cyano-7-deazaguanine synthase (Thiobacillus denitrificans (strain ATCC 25259 / T1)).